We begin with the raw amino-acid sequence, 330 residues long: Basic leucine zipper 2 (330 aa).

The tract at residues 1–207 (MAQLPPKIPT…NRQSAQRSRV (207 aa)) is disordered. Residues 21-34 (GHHHHAAHGHHHQR) are compositionally biased toward basic residues. Residues 45–56 (PLPPFPLPPPAP) show a composition bias toward pro residues. Composition is skewed to low complexity over residues 57-72 (ANGGAQQQQQQQQHQP) and 139-151 (QPAAPAASASSPS). Positions 155 to 166 (SMNDEKQDKGET) are enriched in basic and acidic residues. Residues 188–244 (DPKRVKRILANRQSAQRSRVRKLQYISELERSVTSLQTEVSALSPRVAFLDHQRSLL) enclose the bZIP domain. The segment at 190–209 (KRVKRILANRQSAQRSRVRK) is basic motif. A leucine-zipper region spans residues 216–244 (LERSVTSLQTEVSALSPRVAFLDHQRSLL). A disordered region spans residues 267 to 330 (GGTEEGDREA…LVIGRDPDAL (64 aa)).

Expressed in roots, shoots and panicles.

It localises to the nucleus. Its function is as follows. Transcription regulator. The chain is Basic leucine zipper 2 (BZIP02) from Oryza sativa subsp. japonica (Rice).